The following is a 555-amino-acid chain: Dihydroxy-acid dehydratase (555 aa).

Mg(2+) is bound at residue Asp78. Cys119 lines the [2Fe-2S] cluster pocket. The Mg(2+) site is built by Asp120 and Lys121. N6-carboxylysine is present on Lys121. A [2Fe-2S] cluster-binding site is contributed by Cys191. Glu444 contributes to the Mg(2+) binding site. Catalysis depends on Ser470, which acts as the Proton acceptor.

The protein belongs to the IlvD/Edd family. Homodimer. [2Fe-2S] cluster is required as a cofactor. The cofactor is Mg(2+).

It catalyses the reaction (2R)-2,3-dihydroxy-3-methylbutanoate = 3-methyl-2-oxobutanoate + H2O. It carries out the reaction (2R,3R)-2,3-dihydroxy-3-methylpentanoate = (S)-3-methyl-2-oxopentanoate + H2O. It participates in amino-acid biosynthesis; L-isoleucine biosynthesis; L-isoleucine from 2-oxobutanoate: step 3/4. It functions in the pathway amino-acid biosynthesis; L-valine biosynthesis; L-valine from pyruvate: step 3/4. Functions in the biosynthesis of branched-chain amino acids. Catalyzes the dehydration of (2R,3R)-2,3-dihydroxy-3-methylpentanoate (2,3-dihydroxy-3-methylvalerate) into 2-oxo-3-methylpentanoate (2-oxo-3-methylvalerate) and of (2R)-2,3-dihydroxy-3-methylbutanoate (2,3-dihydroxyisovalerate) into 2-oxo-3-methylbutanoate (2-oxoisovalerate), the penultimate precursor to L-isoleucine and L-valine, respectively. In Maridesulfovibrio salexigens (strain ATCC 14822 / DSM 2638 / NCIMB 8403 / VKM B-1763) (Desulfovibrio salexigens), this protein is Dihydroxy-acid dehydratase.